A 205-amino-acid chain; its full sequence is Outer-membrane lipoprotein carrier protein (205 aa).

A signal peptide spans 1–21 (MKKIVLLVTLVFSINYSFANA).

It belongs to the LolA family. In terms of assembly, monomer.

Its subcellular location is the periplasm. Functionally, participates in the translocation of lipoproteins from the inner membrane to the outer membrane. Only forms a complex with a lipoprotein if the residue after the N-terminal Cys is not an aspartate (The Asp acts as a targeting signal to indicate that the lipoprotein should stay in the inner membrane). In Francisella philomiragia subsp. philomiragia (strain ATCC 25017 / CCUG 19701 / FSC 153 / O#319-036), this protein is Outer-membrane lipoprotein carrier protein.